Here is a 495-residue protein sequence, read N- to C-terminus: Glucose-6-phosphate 1-dehydrogenase (495 aa).

Residues 11–18 (GASGDLAK), Arg-45, 84–85 (DV), and Lys-147 contribute to the NADP(+) site. Residues His-177, Lys-181, Glu-215, and Asp-234 each contribute to the substrate site. His-239 serves as the catalytic Proton acceptor. Residues Lys-339 and Lys-344 each contribute to the substrate site.

Belongs to the glucose-6-phosphate dehydrogenase family.

The catalysed reaction is D-glucose 6-phosphate + NADP(+) = 6-phospho-D-glucono-1,5-lactone + NADPH + H(+). It functions in the pathway carbohydrate degradation; pentose phosphate pathway; D-ribulose 5-phosphate from D-glucose 6-phosphate (oxidative stage): step 1/3. Functionally, catalyzes the oxidation of glucose 6-phosphate to 6-phosphogluconolactone. The sequence is that of Glucose-6-phosphate 1-dehydrogenase from Streptococcus pneumoniae serotype 4 (strain ATCC BAA-334 / TIGR4).